Consider the following 191-residue polypeptide: Guanylate kinase (191 aa).

The 179-residue stretch at 10–188 (GQLIVLTGPS…ALHRLVKLIG (179 aa)) folds into the Guanylate kinase-like domain. 17–24 (GPSGVGKG) provides a ligand contact to ATP.

Belongs to the guanylate kinase family.

It is found in the cytoplasm. The enzyme catalyses GMP + ATP = GDP + ADP. Essential for recycling GMP and indirectly, cGMP. This is Guanylate kinase (gmk) from Synechocystis sp. (strain ATCC 27184 / PCC 6803 / Kazusa).